A 737-amino-acid chain; its full sequence is Dual specificity protein kinase KNS1 (737 aa).

2 disordered regions span residues 1–33 (MSQN…SSNK) and 270–290 (SSLR…NKSN). Residues 15-33 (ANMNNSTTTGPANNTSSNK) show a composition bias toward polar residues. Residues 277 to 290 (SNGSSESASSNKSN) are compositionally biased toward low complexity. One can recognise a Protein kinase domain in the interval 313–720 (FVVKDLLGQG…AKDALDHEWF (408 aa)). Residues 319–327 (LGQGTFGKV) and lysine 343 contribute to the ATP site. Aspartate 440 functions as the Proton acceptor in the catalytic mechanism. Phosphothreonine is present on threonine 562.

Belongs to the protein kinase superfamily. CMGC Ser/Thr protein kinase family. Lammer subfamily. Post-translationally, phosphorylated (auto-) on Ser/Thr/Tyr.

The enzyme catalyses L-seryl-[protein] + ATP = O-phospho-L-seryl-[protein] + ADP + H(+). It carries out the reaction L-threonyl-[protein] + ATP = O-phospho-L-threonyl-[protein] + ADP + H(+). It catalyses the reaction L-tyrosyl-[protein] + ATP = O-phospho-L-tyrosyl-[protein] + ADP + H(+). Functionally, nonessential protein kinase. The chain is Dual specificity protein kinase KNS1 (KNS1) from Saccharomyces cerevisiae (strain ATCC 204508 / S288c) (Baker's yeast).